The sequence spans 390 residues: Fluoride export protein 1 (390 aa).

A disordered region spans residues 1–22; it reads MVAPLVSESQSSSIEETDEQQQ. The Cytoplasmic segment spans residues 1 to 72; the sequence is MVAPLVSESQ…RFLDKTQKYY (72 aa). Residues 73–93 form a helical membrane-spanning segment; the sequence is PVILNIVHGAIWGVLVRKGLM. At 94-100 the chain is on the extracellular side; it reads SLTTYSG. The chain crosses the membrane as a helical span at residues 101–121; that stretch reads SFLSGVIWANFAACVVMGLAI. Residues 122-143 lie on the Cytoplasmic side of the membrane; sequence DGEVFWIRLLEEKDYPNKGAIP. The helical transmembrane segment at 144-164 threads the bilayer; that stretch reads VYTGLTTGFCGTVSSFSSVIL. Over 165–185 the chain is Extracellular; the sequence is EAFNKAADTDIGVRHHYPNGA. A helical membrane pass occupies residues 186–206; sequence YGIMQFLAVILAQFGLSIMGF. Over 207–229 the chain is Cytoplasmic; sequence HMGKQFSAVVDNYLPLVTKRIYK. The chain crosses the membrane as a helical span at residues 230–250; it reads VLELTSMILGVVLVVITCILI. Over 251–256 the chain is Extracellular; that stretch reads GVKKQG. A helical membrane pass occupies residues 257–279; sequence SWRSWTFSMLFAPFGALLRYYLS. Residues 280–290 are Cytoplasmic-facing; sequence KFLNNKVSNFP. A helical membrane pass occupies residues 291–311; that stretch reads LGTFTANFLGTLLLAVFTLLA. Topologically, residues 312-338 are extracellular; the sequence is RGKLPGGKGHIVTNTIALHVLEGLDDG. A helical transmembrane segment spans residues 339–359; that stretch reads FCGGLTTVSTFVVELFGLKTL. Residues 360 to 368 are Cytoplasmic-facing; the sequence is FSYRYGTIS. A helical membrane pass occupies residues 369–389; the sequence is ILVCFAGVVLILGSYNWSVGL. Aspartate 390 is a topological domain (extracellular).

It belongs to the fluoride channel Fluc/FEX (TC 1.A.43) family.

The protein resides in the cell membrane. The catalysed reaction is fluoride(in) = fluoride(out). Its function is as follows. Fluoride channel required for the rapid expulsion of cytoplasmic fluoride. The chain is Fluoride export protein 1 from Candida albicans (strain SC5314 / ATCC MYA-2876) (Yeast).